The following is a 670-amino-acid chain: E3 ubiquitin-protein ligase TRAF7 (670 aa).

Disordered stretches follow at residues 1-37 and 49-97; these read MSSG…FGPA and GTST…SLHS. Polar residues-rich tracts occupy residues 15–31 and 49–67; these read GPSN…TRME and GTST…STLA. Phosphoserine occurs at positions 61, 88, and 91. The segment at 131-165 adopts an RING-type zinc-finger fold; sequence CQLCCSVFKDPVITTCGHTFCRRCALKSEKCPVDN. A TRAF-type zinc finger spans residues 222–276; that stretch reads HEGSCDYRPVRCPNNPSCPPLLRMNLEAHLKECEHIKCPHSKYGCTFIGNQDTYE. WD repeat units lie at residues 394 to 433, 437 to 474, 477 to 513, 515 to 554, 557 to 594, 597 to 638, and 641 to 669; these read GHQG…KCQK, GHDG…KVNT, AHDN…LKLK, ELTG…CIHV, TSGG…QVRT, GHVG…CTQT, and RHQG…KVWT.

It belongs to the WD repeat TRAF7 family. In terms of assembly, homodimer. Interacts with MAP3K3 and promotes the kinase activity of this enzyme. In terms of processing, phosphorylated by MAP3K3. Ubiquitinates itself upon phosphorylation. In terms of tissue distribution, ubiquitously expressed with high levels in skeletal muscle, heart, colon, spleen, kidney, liver and placenta.

It localises to the cytoplasmic vesicle. It is found in the cytoplasm. The protein localises to the nucleus. It catalyses the reaction S-ubiquitinyl-[E2 ubiquitin-conjugating enzyme]-L-cysteine + [acceptor protein]-L-lysine = [E2 ubiquitin-conjugating enzyme]-L-cysteine + N(6)-ubiquitinyl-[acceptor protein]-L-lysine.. It functions in the pathway protein modification; protein ubiquitination. E3 ubiquitin and SUMO-protein ligase that plays a role in different biological processes such as innate immunity, inflammation or apoptosis. Potentiates MAP3K3-mediated activation of JUN/AP1 and DDIT3 transcriptional regulators. Negatively regulates MYB transcriptional activity by sequestering it to the cytosol via SUMOylation. Plays a role in the phosphorylation of MAPK1 and/or MAPK3, probably via its interaction with MAP3K3. Negatively regulates RLR-mediated innate immunity by promoting 'Lys-48'-linked ubiquitination of TBK1 through its RING domain to inhibit the cellular antiviral response. Promotes 'Lys-29'-linked polyubiquitination of NEMO/IKBKG and RELA leading to targeting these two proteins to lysosomal degradative pathways, reducing the transcriptional activity of NF-kappa-B. The polypeptide is E3 ubiquitin-protein ligase TRAF7 (TRAF7) (Homo sapiens (Human)).